The following is a 295-amino-acid chain: Acetylglutamate kinase (295 aa).

Residues 66–67 (GG), arginine 88, and asparagine 193 contribute to the substrate site.

This sequence belongs to the acetylglutamate kinase family. ArgB subfamily.

Its subcellular location is the cytoplasm. It carries out the reaction N-acetyl-L-glutamate + ATP = N-acetyl-L-glutamyl 5-phosphate + ADP. Its pathway is amino-acid biosynthesis; L-arginine biosynthesis; N(2)-acetyl-L-ornithine from L-glutamate: step 2/4. Functionally, catalyzes the ATP-dependent phosphorylation of N-acetyl-L-glutamate. The chain is Acetylglutamate kinase from Sinorhizobium medicae (strain WSM419) (Ensifer medicae).